The primary structure comprises 249 residues: MEGDCLSCMKYLMFVFNFFIFLGGACLLGIGIWVMVDPTGFREIVAANPLLITGAYILLAMGGLLFLLGFLGCCGAVRENKCLLLFFFLFILIIFLAELSAAILAFIFRGNLTREFFTKELTKHYQGSNDTDVFSATWNSVMITFGCCGVNGPEDFKYASVFRLLTLDSDEVPEACCRREPQSRDGVLLSREECLLGRDLFLNKQGCYTVILNAFETYVYLAGALAIGVLAIELFAMIFAMCLFRGIIQ.

At 1–13 the chain is on the cytoplasmic side; the sequence is MEGDCLSCMKYLM. The chain crosses the membrane as a helical span at residues 14–34; it reads FVFNFFIFLGGACLLGIGIWV. The Extracellular segment spans residues 35-49; the sequence is MVDPTGFREIVAANP. A helical membrane pass occupies residues 50-70; it reads LLITGAYILLAMGGLLFLLGF. Topologically, residues 71–83 are cytoplasmic; sequence LGCCGAVRENKCL. Residues 84 to 104 traverse the membrane as a helical segment; the sequence is LLFFFLFILIIFLAELSAAIL. Residues 105 to 223 lie on the Extracellular side of the membrane; sequence AFIFRGNLTR…AFETYVYLAG (119 aa). N111 and N129 each carry an N-linked (GlcNAc...) asparagine glycan. A helical membrane pass occupies residues 224–244; sequence ALAIGVLAIELFAMIFAMCLF. The Cytoplasmic portion of the chain corresponds to 245 to 249; the sequence is RGIIQ.

The protein belongs to the tetraspanin (TM4SF) family. Interacts with ORAI1; this interaction regulates ORAI1 exit from the endoplasmic (ER), and/or Golgi, and trafficking to the cell surface.

It is found in the membrane. Plays a role in the cell surface localization of ORAI1 and may participate in the regulation of Ca(2+) signaling and the VWF release in response to inflammatory stimuli. The polypeptide is Tetraspanin-18 (Bos taurus (Bovine)).